Reading from the N-terminus, the 260-residue chain is Thiazole synthase (260 aa).

Lys-96 (schiff-base intermediate with DXP) is an active-site residue. 1-deoxy-D-xylulose 5-phosphate-binding positions include Gly-157, 183-184 (AG), and 205-206 (AS).

This sequence belongs to the ThiG family. As to quaternary structure, homotetramer. Forms heterodimers with either ThiH or ThiS.

It localises to the cytoplasm. It carries out the reaction [ThiS sulfur-carrier protein]-C-terminal-Gly-aminoethanethioate + 2-iminoacetate + 1-deoxy-D-xylulose 5-phosphate = [ThiS sulfur-carrier protein]-C-terminal Gly-Gly + 2-[(2R,5Z)-2-carboxy-4-methylthiazol-5(2H)-ylidene]ethyl phosphate + 2 H2O + H(+). The protein operates within cofactor biosynthesis; thiamine diphosphate biosynthesis. Catalyzes the rearrangement of 1-deoxy-D-xylulose 5-phosphate (DXP) to produce the thiazole phosphate moiety of thiamine. Sulfur is provided by the thiocarboxylate moiety of the carrier protein ThiS. In vitro, sulfur can be provided by H(2)S. The protein is Thiazole synthase of Corynebacterium glutamicum (strain R).